The primary structure comprises 843 residues: Leucine--tRNA ligase (843 aa).

A 'HIGH' region motif is present at residues 61-71 (PYPSGDLHMGH). Residues 606 to 610 (AMSKS) carry the 'KMSKS' region motif. ATP is bound at residue lysine 609.

This sequence belongs to the class-I aminoacyl-tRNA synthetase family.

The protein localises to the cytoplasm. It carries out the reaction tRNA(Leu) + L-leucine + ATP = L-leucyl-tRNA(Leu) + AMP + diphosphate. In Arthrobacter sp. (strain FB24), this protein is Leucine--tRNA ligase.